Consider the following 880-residue polypeptide: MKKLSSSEIRQMYLDFFHEKGHTIVPSASLVPVDDPTLLWINSGVATMKKYFDGSVVPDNPRMTSSQKSIRTNDIENVGRTARHHTLFEMLGNFSVGDYFKKEAISWAWELLTSPKWFGWDPDKLYMTVYPKDTDAAKFWEATGVKPDHIIKVEDNFWDIGQGPSGPDSEIFYDRGEAFNNLADDDPENYPGGENERYLEVWNIVFSQFNHTPEGTYEPLPRKNIDTGMGLERVVSVFQNAKTNFETDLFLPIIHKTEELSDGKHYGDNAQDDVSFKVIADHARAITFAISDGALPSNEGRGYVIRRLIRRAILHGQKLGLKEAFLDQLVPIVGKIMASHYPDVLKNSAYIEKIVASEESRFNETLNDGLNLLNNLIAETKQTGHDTLAGKDAFKLYDTYGFPFELTKEYAGDEDLDVDEAGFEVEMKAQRDRARNARSSAKSMGVQRSLLIDIKTPSEYVGYDELTNVQGTLNDIIVDETLVDHVDSGQAEMIFSKTPFYAEMGGQVADRGVILDDAGEMVAKVTDVQNAPNKQHLHTVEVLKPMRKDATYTLNVDLAFHNKVEKNHTATHLLDQALRDVLGEHTKQAGSLVEPDYLRFDFTHFGQVTDEELAKVEQIVNDKIWAALPVSAIQTDQETGHKMGAIAVFTEKYGKIVRVVSIGDYSIEFDGGTHVKNSSELGLFKIVSETGIGAGTRRIEAVTSKEAFELLAGEEQTLKQVAAQVKAPKLADTPAKVSQLQADLKAEQQNRASLESRLAKQQAGAVFDQVDDVNGTTLIAQQIEVSGMDQLRQLADTWKTKQYSDVLVLGTVIGEKVNLLVAVSDDKVKAGIKAGDLIKAIAPKVGGGGGGRPTLAQAGGKKPAGLPVALKAAHEWLAEQ.

The protein belongs to the class-II aminoacyl-tRNA synthetase family.

It localises to the cytoplasm. It catalyses the reaction tRNA(Ala) + L-alanine + ATP = L-alanyl-tRNA(Ala) + AMP + diphosphate. In terms of biological role, catalyzes the attachment of alanine to tRNA(Ala) in a two-step reaction: alanine is first activated by ATP to form Ala-AMP and then transferred to the acceptor end of tRNA(Ala). Also edits incorrectly charged Ser-tRNA(Ala) and Gly-tRNA(Ala) via its editing domain. The protein is Alanine--tRNA ligase (alaS) of Lactiplantibacillus plantarum (strain ATCC BAA-793 / NCIMB 8826 / WCFS1) (Lactobacillus plantarum).